The following is a 507-amino-acid chain: Cytochrome P450 monooxygenase ptmU (507 aa).

Residues V4–F24 traverse the membrane as a helical segment. N98, N202, and N398 each carry an N-linked (GlcNAc...) asparagine glycan. A heme-binding site is contributed by C444.

Belongs to the cytochrome P450 family. The cofactor is heme.

Its subcellular location is the membrane. The protein operates within secondary metabolite biosynthesis. In terms of biological role, cytochrome P450 monooxygenase; part of the gene cluster that mediates the biosynthesis of the indole diterpenes penitrems. The geranylgeranyl diphosphate (GGPP) synthase ptmG catalyzes the first step in penitrem biosynthesis via conversion of farnesyl pyrophosphate and isopentyl pyrophosphate into geranylgeranyl pyrophosphate (GGPP). Condensation of indole-3-glycerol phosphate with GGPP by the prenyl transferase ptmC then forms 3-geranylgeranylindole (3-GGI). Epoxidation by the FAD-dependent monooxygenase ptmM leads to a epoxidized-GGI that is substrate of the terpene cyclase ptmB for cyclization to yield paspaline. Paspaline is subsequently converted to 13-desoxypaxilline by the cytochrome P450 monooxygenase ptmP, the latter being then converted to paxilline by the cytochrome P450 monooxygenase ptmQ. Paxilline is converted to beta-paxitriol via C-10 ketoreduction by the short-chain dehydrogenase ptmH which can be monoprenylated at the C-20 by the indole diterpene prenyltransferase ptmD. A two-step elimination (acetylation and elimination) process performed by the O-acetyltransferase ptmV and ptmI leads to the production of the prenylated form of penijanthine. The FAD-linked oxidoreductase ptmO then converts the prenylated form of penijanthine into PC-M5 which is in turn transformed into PC-M4 by the aromatic dimethylallyltransferase ptmE. Five sequential oxidative transformations performed by the cytochrome P450 monooxygenases ptmK, ptmU, ptmL, ptmN and ptmJ yield the various penitrem compounds. PtmK, ptmU and ptmM are involved in the formation of the key bicyclic ring of penitrem C via the formation of the intermediates secopenitrem D and penitrem D. PtmL catalyzes the epoxidation of penitrem D and C to yield penitrem B and F, respectively. PtmJ catalyzes the last benzylic hydroxylation to convert penitrem B to prenitrem E and penitrem F to penitrem A. This is Cytochrome P450 monooxygenase ptmU from Penicillium ochrochloron.